We begin with the raw amino-acid sequence, 101 residues long: Immunity protein CdiI-2 (101 aa).

Specifically interacts with the truncated CT fragment of cognate toxin protein CdiA-2, which inhibits CdiA-2 tRNA nuclease activity.

Immunity protein component of a toxin-immunity protein module, which functions as a cellular contact-dependent growth inhibition (CDI) system. CDI modules allow bacteria to communicate with and inhibit the growth of closely related neighboring bacteria in a contact-dependent fashion. Neutralizes the toxic activity of cognate toxin CdiA (C-terminal 301 residue CT fragment) upon expression in E.coli. Does not inhibit toxic activity of CdiA from other strains of B.pseudomallei. Functionally, expression of this cdiAIB locus in B.thailandensis confers protection against other bacteria carrying the locus; growth inhibition requires cellular contact. This chain is Immunity protein CdiI-2 (cdiI2), found in Burkholderia pseudomallei (strain 1026b).